The following is a 173-amino-acid chain: Flagellar biosynthetic protein FliV (173 aa).

Belongs to the FliB family.

Its function is as follows. Required for the secretion of flagellin and expression of motility. The polypeptide is Flagellar biosynthetic protein FliV (fliV) (Salmonella muenchen).